Consider the following 635-residue polypeptide: Glycosyltransferase-like protein gnt13 (635 aa).

The Cytoplasmic segment spans residues 1 to 18 (MNINTLIINFNKVKRMKN). The chain crosses the membrane as a helical; Signal-anchor for type II membrane protein span at residues 19 to 38 (FLILTLLVVMVVVFLQGPTL). The Extracellular segment spans residues 39–635 (MINNSGQGMG…PNECFSDHHW (597 aa)). N-linked (GlcNAc...) asparagine glycans are attached at residues Asn-41 and Asn-179. Disordered regions lie at residues 300–358 (NINN…NNID) and 389–458 (NIDN…NNEP). The span at 389–456 (NIDNNNSNYN…NNNNNNNNNN (68 aa)) shows a compositional bias: low complexity. N-linked (GlcNAc...) asparagine glycans are attached at residues Asn-393 and Asn-535.

It belongs to the glycosyltransferase 8 family. Highly divergent.

Its subcellular location is the membrane. This is Glycosyltransferase-like protein gnt13 (gnt13) from Dictyostelium discoideum (Social amoeba).